We begin with the raw amino-acid sequence, 642 residues long: Threonine--tRNA ligase (642 aa).

Positions 1-61 (MPIITLPDGS…TEDAELQLIT (61 aa)) constitute a TGS domain. A catalytic region spans residues 242–535 (DHRKLGKSLD…LVEHYEGKFP (294 aa)). Cys333, His384, and His512 together coordinate Zn(2+).

It belongs to the class-II aminoacyl-tRNA synthetase family. In terms of assembly, homodimer. Zn(2+) is required as a cofactor.

The protein localises to the cytoplasm. The enzyme catalyses tRNA(Thr) + L-threonine + ATP = L-threonyl-tRNA(Thr) + AMP + diphosphate + H(+). Functionally, catalyzes the attachment of threonine to tRNA(Thr) in a two-step reaction: L-threonine is first activated by ATP to form Thr-AMP and then transferred to the acceptor end of tRNA(Thr). Also edits incorrectly charged L-seryl-tRNA(Thr). In Hydrogenovibrio crunogenus (strain DSM 25203 / XCL-2) (Thiomicrospira crunogena), this protein is Threonine--tRNA ligase.